A 305-amino-acid chain; its full sequence is Methionyl-tRNA formyltransferase (305 aa).

Residue 108 to 111 (SLLP) participates in (6S)-5,6,7,8-tetrahydrofolate binding.

The protein belongs to the Fmt family.

It catalyses the reaction L-methionyl-tRNA(fMet) + (6R)-10-formyltetrahydrofolate = N-formyl-L-methionyl-tRNA(fMet) + (6S)-5,6,7,8-tetrahydrofolate + H(+). Functionally, attaches a formyl group to the free amino group of methionyl-tRNA(fMet). The formyl group appears to play a dual role in the initiator identity of N-formylmethionyl-tRNA by promoting its recognition by IF2 and preventing the misappropriation of this tRNA by the elongation apparatus. In Thermus thermophilus (strain ATCC 27634 / DSM 579 / HB8), this protein is Methionyl-tRNA formyltransferase.